The primary structure comprises 939 residues: AP-2 complex subunit alpha (939 aa).

Basic and acidic residues predominate over residues 623–633 (RVPENEIRESK). Residues 623 to 660 (RVPENEIRESKSPAPTSGPGSVLQNNVHVNNSHSKLNN) are disordered. Residues 635–660 (PAPTSGPGSVLQNNVHVNNSHSKLNN) are compositionally biased toward polar residues.

The protein belongs to the adapter complexes large subunit family. In terms of assembly, adaptor protein complex 2 (AP-2) is a heterotetramer composed of two large adaptins (alpha-type and beta-type subunits), a medium adaptin (mu-type subunit AP50) and a small adaptin (sigma-type subunit AP17).

The protein resides in the cell membrane. It localises to the membrane. The protein localises to the coated pit. In terms of biological role, adaptins are components of the adapter complexes which link clathrin to receptors in coated vesicles. Clathrin-associated protein complexes are believed to interact with the cytoplasmic tails of membrane proteins, leading to their selection and concentration. Alpha adaptin is a subunit of the plasma membrane adapter. This Drosophila pseudoobscura pseudoobscura (Fruit fly) protein is AP-2 complex subunit alpha.